A 543-amino-acid polypeptide reads, in one-letter code: Chaperonin GroEL (543 aa).

Residues 29-32 (TLGP), 86-90 (DGTTT), glycine 413, 476-478 (NAA), and aspartate 492 contribute to the ATP site.

This sequence belongs to the chaperonin (HSP60) family. Forms a cylinder of 14 subunits composed of two heptameric rings stacked back-to-back. Interacts with the co-chaperonin GroES.

It is found in the cytoplasm. It catalyses the reaction ATP + H2O + a folded polypeptide = ADP + phosphate + an unfolded polypeptide.. Functionally, together with its co-chaperonin GroES, plays an essential role in assisting protein folding. The GroEL-GroES system forms a nano-cage that allows encapsulation of the non-native substrate proteins and provides a physical environment optimized to promote and accelerate protein folding. The chain is Chaperonin GroEL from Streptococcus pyogenes serotype M3 (strain SSI-1).